The following is a 130-amino-acid chain: Large ribosomal subunit protein bL17 (130 aa).

The protein belongs to the bacterial ribosomal protein bL17 family. Part of the 50S ribosomal subunit. Contacts protein L32.

The protein is Large ribosomal subunit protein bL17 of Buchnera aphidicola subsp. Acyrthosiphon pisum (strain 5A).